The primary structure comprises 206 residues: Transcription elongation factor A protein-like 5 (206 aa).

A compositionally biased stretch (basic and acidic residues) spans Met1–Asp26. Positions Met1–Val206 are disordered. A compositionally biased stretch (acidic residues) spans Glu27–Pro42. Over residues Asp43–Asp56 the composition is skewed to basic and acidic residues. A compositionally biased stretch (acidic residues) spans Glu57–Gly70. Composition is skewed to basic and acidic residues over residues Asn71–Ser86, Ala102–Pro113, Asp121–Arg160, and Gly196–Val206.

It belongs to the TFS-II family. TFA subfamily.

It is found in the nucleus. Functionally, may be involved in transcriptional regulation. This is Transcription elongation factor A protein-like 5 (TCEAL5) from Homo sapiens (Human).